The sequence spans 485 residues: Zinc finger protein 577 (485 aa).

The segment at 1–21 is disordered; sequence MKNATIVMSVRREQGSSSGEG. The 72-residue stretch at 23 to 94 folds into the KRAB domain; that stretch reads LSFEDVAVGF…EGAAHSQICP (72 aa). The C2H2-type 1; degenerate zinc-finger motif lies at 158 to 180; that stretch reads HECSVCGRAFSRKAQLIQHQRTE. 7 C2H2-type zinc fingers span residues 186–208, 214–236, 242–264, 270–292, 298–320, 326–348, and 354–376; these read HGCGECGKTFMRKIQLTEHQRTH, HECSECGKAFSRKSQLMVHQRTH, YRCSKCGKAFSRKCRLNRHQRSH, YGCSVCGKAFSQKAYLTAHQRLH, YKCSDCGRTFYFKSDLTRHQRIH, YECSECEKAFRSKSKLIQHQRTH, and YSCRECGKAFAHMSVLIKHEKTH.

It belongs to the krueppel C2H2-type zinc-finger protein family.

Its subcellular location is the nucleus. Its function is as follows. May be involved in transcriptional regulation. The sequence is that of Zinc finger protein 577 (ZNF577) from Homo sapiens (Human).